Reading from the N-terminus, the 870-residue chain is Protein RRP6-like 2 (870 aa).

The 3'-5' exonuclease domain maps to 263-428; it reads VQEVKDLKEL…YIYDLIKLEL (166 aa). One can recognise an HRDC domain in the interval 479 to 559; that stretch reads NAAQLAIVAG…RQSMQHYAAF (81 aa). Disordered regions lie at residues 583 to 605, 649 to 668, 688 to 775, and 821 to 870; these read SEKK…SSQL, GALL…EKVK, TEKV…EDEP, and FGEG…SFKN. 2 stretches are compositionally biased toward basic and acidic residues: residues 720–729 and 821–834; these read SKEDGVKELK and FGEG…KREA. Over residues 840-849 the composition is skewed to polar residues; sequence KGSTQEQSEF.

The protein localises to the nucleus. The protein resides in the nucleolus. It is found in the cytoplasm. Acts as an important epigenetic regulator through multiple silencing mechanisms. Involved in association with RRP6L1 in the silencing of the solo LTR locus. Controls levels of non-coding RNAs (ncRNAs) from the solo LTR locus. Seems to function independently of the RNA-mediated gene silencing (RdDM) pathway. Functions redundantly with RRP6L1 in the regulation of FLC locus. Participates in the maintenance of trimethylated 'Lys-27' (H3K27me3) at FLC locus via the regulation of antisense long non-coding RNAs (lncRNAs) and the regulation of diverse antisense RNAs derived from the FLC locus. Seems not involved in the exosomal RNA degradation. May be involved in poly(A)-mediated RNA degradation. The protein is Protein RRP6-like 2 of Arabidopsis thaliana (Mouse-ear cress).